The following is a 188-amino-acid chain: Elongation factor P-like protein (188 aa).

Belongs to the elongation factor P family.

This chain is Elongation factor P-like protein, found in Marinobacter nauticus (strain ATCC 700491 / DSM 11845 / VT8) (Marinobacter aquaeolei).